Consider the following 1058-residue polypeptide: Leucine-rich repeat and coiled-coil domain-containing protein PF3D7_0703800 (1058 aa).

Positions 1-10 are enriched in basic residues; that stretch reads MAIKKKKKET. The disordered stretch occupies residues 1-34; the sequence is MAIKKKKKETKSKDNNNDNLRNEKKSTNLENGKY. The span at 11–34 shows a compositional bias: basic and acidic residues; sequence KSKDNNNDNLRNEKKSTNLENGKY. Positions 515–544 form a coiled coil; the sequence is LKQLYTFIKNYENNNDKLNIKSQIINKDKN. A compositionally biased stretch (basic and acidic residues) spans 641-661; the sequence is ENKDHLQHEEHTHEEEPKDAN. 2 disordered regions span residues 641-665 and 706-728; these read ENKDHLQHEEHTHEEEPKDANGDMV and NIEDKSGDMENMKEPNGDMENMK. A coiled-coil region spans residues 872-905; it reads NYDHTQENILKNKNNMEDQNNLLEQNIMTDQLQN.

This is Leucine-rich repeat and coiled-coil domain-containing protein PF3D7_0703800 from Plasmodium falciparum (isolate 3D7).